Consider the following 457-residue polypeptide: Phosphomethylpyrimidine synthase (457 aa).

Residues Asn80, Met109, Tyr139, His175, 195–197, 236–239, and Glu275 contribute to the substrate site; these read SRG and DSLR. Position 279 (His279) interacts with Zn(2+). Tyr302 provides a ligand contact to substrate. His343 contacts Zn(2+). 3 residues coordinate [4Fe-4S] cluster: Cys423, Cys426, and Cys431.

Belongs to the ThiC family. [4Fe-4S] cluster is required as a cofactor.

The enzyme catalyses 5-amino-1-(5-phospho-beta-D-ribosyl)imidazole + S-adenosyl-L-methionine = 4-amino-2-methyl-5-(phosphooxymethyl)pyrimidine + CO + 5'-deoxyadenosine + formate + L-methionine + 3 H(+). It functions in the pathway cofactor biosynthesis; thiamine diphosphate biosynthesis. In terms of biological role, catalyzes the synthesis of the hydroxymethylpyrimidine phosphate (HMP-P) moiety of thiamine from aminoimidazole ribotide (AIR) in a radical S-adenosyl-L-methionine (SAM)-dependent reaction. The chain is Phosphomethylpyrimidine synthase from Nostoc sp. (strain PCC 7120 / SAG 25.82 / UTEX 2576).